The sequence spans 2530 residues: Cullin-9 (2530 aa).

K87 is covalently cross-linked (Glycyl lysine isopeptide (Lys-Gly) (interchain with G-Cter in ubiquitin)). Residues 367 to 440 (RSEFSSRSGY…HWHMLEILGP (74 aa)) enclose the CPH domain. 2 disordered regions span residues 585–639 (LPSS…KAQS) and 930–951 (RGSPERAVLETPSTQGQDGSPE). Residues 940–949 (TPSTQGQDGS) are compositionally biased toward polar residues. S978 bears the Phosphoserine mark. The 180-residue stretch at 1145–1324 (PITIPFFDVF…RTCLFYTIRA (180 aa)) folds into the DOC domain. 1365–1372 (AAQALGKT) provides a ligand contact to ATP. Disordered regions lie at residues 1435–1468 (EAPPGPSPEPSSQPLSKNSKGQDGSPTPAPTPVC) and 1667–1690 (GDQEEWRPEKVEEDDEGQETGREL). At S1459 the chain carries Phosphoserine. Residue K1884 forms a Glycyl lysine isopeptide (Lys-Gly) (interchain with G-Cter in NEDD8) linkage. Residues 2070-2287 (RPDQCPVCVT…KDYYNCSAMV (218 aa)) are TRIAD supradomain. C2074, C2077, C2092, H2094, C2097, C2100, C2119, C2124, C2164, C2170, C2185, C2188, C2193, C2196, H2202, C2207, C2240, and C2243 together coordinate Zn(2+). An RING-type 1 zinc finger spans residues 2074 to 2124 (CPVCVTPLGPHDDSPSLCCLHCCCKSCWNEYLTTRIEQNFVLNCTCPIADC). The segment at 2144–2207 (SKYEKALLRG…FPEAHYPASC (64 aa)) adopts an IBR-type zinc-finger fold. An RING-type 2; atypical zinc finger spans residues 2240 to 2269 (CPSCQAPIEKNEGCLHMTCARCNHGFCWRC). C2253 is a catalytic residue. C2258, C2261, C2266, C2269, H2277, and C2283 together coordinate Zn(2+). A Phosphoserine modification is found at S2440. The tract at residues 2443–2530 (VETREVKGSN…DEDEDDESYD (88 aa)) is disordered. The span at 2452–2462 (NVPSDQPQGSS) shows a compositional bias: polar residues. Residues 2459-2500 (QGSSGLEVEDEEEEEEEEEEEEEEEEEDVPEWQHEFDEELDN) are a coiled coil. 2 stretches are compositionally biased toward acidic residues: residues 2465–2510 (EVED…EESE) and 2520–2530 (GDEDEDDESYD).

Belongs to the cullin family. In terms of assembly, component of a Cul9-RING complex consisting of CUL9 and RBX1; the CUL9-RBX1 complex is a heterododecamer composed of six CUL9 and six RBX1 protomers. Interacts (via C-terminal TRIAD/RBR supradomain) with E2 ubiquitin-conjugating enzyme UBE2L3. Interacts with CUL7; the interaction with the CUL7 component of the 3M complex leads to inhibition of CUL9 activity. The CUL7-CUL9 heterodimer seems to interact specifically with TP53, likely via the CPH domain. Forms a complex with p53/TP53 in the cytoplasm of unstressed cells. Interacts with UBCH7 and UBCH8. In terms of processing, autoubiquitinated by the CUL9-RBX1 complex at Lys-87. Post-translationally, neddylated. Neddylation is mediated by E1 enzyme UBA3-NAE1 complex and E2 enzyme UBE2F. Structural rearrangment of the C-terminal TRIAD/RBR supradomain may play a role in neddylation and deneddylation.

It localises to the cytoplasm. Its function is as follows. Core component of the Cul9-RING ubiquitin-protein ligase complex composed of CUL9 and RBX1. The CUL9-RBX1 complex mediates ubiquitination and subsequent degradation of BIRC5 and is required to maintain microtubule dynamics and genome integrity. Acts downstream of the 3M complex, which inhibits CUL9 activity and the ubiquitination of BIRC5. The CUL9-RBX1 complex also mediates mono-ubiquitination of p53/TP53. Acts as a cytoplasmic anchor protein in p53/TP53-associated protein complex. Regulates the subcellular localization of p53/TP53 and its subsequent function. Ubiquitinates apurinic/apyrimidinic endodeoxyribonuclease APEX2. Ubiquitination by the CUL9-RBX1 complex is predominantly mediated by E2 ubiquitin-conjugating enzymes UBE2L3 and UBE2D2. The protein is Cullin-9 (Cul9) of Mus musculus (Mouse).